We begin with the raw amino-acid sequence, 360 residues long: UDP-N-acetylglucosamine--N-acetylmuramyl-(pentapeptide) pyrophosphoryl-undecaprenol N-acetylglucosamine transferase (360 aa).

Residues serine 198 and glutamine 289 each contribute to the UDP-N-acetyl-alpha-D-glucosamine site.

The protein belongs to the glycosyltransferase 28 family. MurG subfamily.

The protein localises to the cell membrane. It catalyses the reaction Mur2Ac(oyl-L-Ala-gamma-D-Glu-L-Lys-D-Ala-D-Ala)-di-trans,octa-cis-undecaprenyl diphosphate + UDP-N-acetyl-alpha-D-glucosamine = beta-D-GlcNAc-(1-&gt;4)-Mur2Ac(oyl-L-Ala-gamma-D-Glu-L-Lys-D-Ala-D-Ala)-di-trans,octa-cis-undecaprenyl diphosphate + UDP + H(+). It functions in the pathway cell wall biogenesis; peptidoglycan biosynthesis. In terms of biological role, cell wall formation. Catalyzes the transfer of a GlcNAc subunit on undecaprenyl-pyrophosphoryl-MurNAc-pentapeptide (lipid intermediate I) to form undecaprenyl-pyrophosphoryl-MurNAc-(pentapeptide)GlcNAc (lipid intermediate II). This Streptococcus pyogenes serotype M5 (strain Manfredo) protein is UDP-N-acetylglucosamine--N-acetylmuramyl-(pentapeptide) pyrophosphoryl-undecaprenol N-acetylglucosamine transferase.